The following is a 132-amino-acid chain: MQFERSDRVSEEIKKELSDIIQHDLKDPRLCAELISIVKVNMSKDLRHAKVYVSIFDKDKEKVETTMKALENAKPYIRREISRRISLRFTPEITFELDDSIEYGARISQILNQLNIPKEDENIEESEGEEEN.

It belongs to the RbfA family. Monomer. Binds 30S ribosomal subunits, but not 50S ribosomal subunits or 70S ribosomes.

The protein localises to the cytoplasm. In terms of biological role, one of several proteins that assist in the late maturation steps of the functional core of the 30S ribosomal subunit. Associates with free 30S ribosomal subunits (but not with 30S subunits that are part of 70S ribosomes or polysomes). Required for efficient processing of 16S rRNA. May interact with the 5'-terminal helix region of 16S rRNA. This is Ribosome-binding factor A from Caldicellulosiruptor bescii (strain ATCC BAA-1888 / DSM 6725 / KCTC 15123 / Z-1320) (Anaerocellum thermophilum).